A 709-amino-acid polypeptide reads, in one-letter code: Molybdenum cofactor sulfurase (709 aa).

K208 is modified (N6-(pyridoxal phosphate)lysine). The active site involves C367. The MOSC domain occupies 563–707 (DNALDRQNCR…LESGMSVNFS (145 aa)).

The protein belongs to the class-V pyridoxal-phosphate-dependent aminotransferase family. MOCOS subfamily. Pyridoxal 5'-phosphate is required as a cofactor.

The catalysed reaction is Mo-molybdopterin + L-cysteine + AH2 = thio-Mo-molybdopterin + L-alanine + A + H2O. It participates in cofactor biosynthesis; molybdopterin biosynthesis. Its function is as follows. Sulfurates the molybdenum cofactor. Sulfation of molybdenum is essential for xanthine dehydrogenase (XDH) and aldehyde oxidase (ADO) enzymes in which molybdenum cofactor is liganded by 1 oxygen and 1 sulfur atom in active form. The chain is Molybdenum cofactor sulfurase from Caenorhabditis elegans.